Consider the following 503-residue polypeptide: ATP synthase subunit alpha (503 aa).

170–177 (GDRATGKT) serves as a coordination point for ATP.

Belongs to the ATPase alpha/beta chains family. As to quaternary structure, F-type ATPases have 2 components, CF(1) - the catalytic core - and CF(0) - the membrane proton channel. CF(1) has five subunits: alpha(3), beta(3), gamma(1), delta(1), epsilon(1). CF(0) has three main subunits: a(1), b(2) and c(9-12). The alpha and beta chains form an alternating ring which encloses part of the gamma chain. CF(1) is attached to CF(0) by a central stalk formed by the gamma and epsilon chains, while a peripheral stalk is formed by the delta and b chains.

The protein localises to the cell inner membrane. It carries out the reaction ATP + H2O + 4 H(+)(in) = ADP + phosphate + 5 H(+)(out). Produces ATP from ADP in the presence of a proton gradient across the membrane. The alpha chain is a regulatory subunit. This Aquifex aeolicus (strain VF5) protein is ATP synthase subunit alpha.